A 235-amino-acid chain; its full sequence is Small ribosomal subunit protein uS3 (235 aa).

In terms of domain architecture, KH type-2 spans Val39–Lys107. Residues Ala215–Lys235 are disordered.

This sequence belongs to the universal ribosomal protein uS3 family. As to quaternary structure, part of the 30S ribosomal subunit. Forms a tight complex with proteins S10 and S14.

Its function is as follows. Binds the lower part of the 30S subunit head. Binds mRNA in the 70S ribosome, positioning it for translation. The chain is Small ribosomal subunit protein uS3 from Haemophilus influenzae (strain ATCC 51907 / DSM 11121 / KW20 / Rd).